A 78-amino-acid polypeptide reads, in one-letter code: Acyl carrier protein (78 aa).

Residues 1-77 (MALIDEIKDV…DAAKYIEEHK (77 aa)) form the Carrier domain. Position 37 is an O-(pantetheine 4'-phosphoryl)serine (serine 37).

The protein belongs to the acyl carrier protein (ACP) family. Post-translationally, 4'-phosphopantetheine is transferred from CoA to a specific serine of apo-ACP by AcpS. This modification is essential for activity because fatty acids are bound in thioester linkage to the sulfhydryl of the prosthetic group.

It is found in the secreted. The protein operates within lipid metabolism; fatty acid biosynthesis. Its function is as follows. Carrier of the growing fatty acid chain in fatty acid biosynthesis. Has hemolytic activity forming pores approximately 1 nm in diameter into erythrocytes. Is able to induce murine colonic lesions and to disrupt the integrity of epithelial cell monolayers. The sequence is that of Acyl carrier protein (acpP) from Brachyspira hyodysenteriae (Treponema hyodysenteriae).